We begin with the raw amino-acid sequence, 200 residues long: Superoxide dismutase [Mn] 1 (200 aa).

Residues His-29, His-76, Asp-158, and His-162 each contribute to the Mn(2+) site.

Belongs to the iron/manganese superoxide dismutase family. In terms of assembly, homodimer or homotetramer. The cofactor is Mn(2+).

The catalysed reaction is 2 superoxide + 2 H(+) = H2O2 + O2. Its activity is regulated as follows. Inhibited by hydrogen peroxide. Is resistant to cyanide and azide inhibition. Destroys superoxide anion radicals which are normally produced within the cells and which are toxic to biological systems. This is Superoxide dismutase [Mn] 1 (sod1) from Halobacterium salinarum (strain ATCC 700922 / JCM 11081 / NRC-1) (Halobacterium halobium).